Consider the following 428-residue polypeptide: UPF0597 protein BF3560 (428 aa).

It belongs to the UPF0597 family.

This Bacteroides fragilis (strain ATCC 25285 / DSM 2151 / CCUG 4856 / JCM 11019 / LMG 10263 / NCTC 9343 / Onslow / VPI 2553 / EN-2) protein is UPF0597 protein BF3560.